Consider the following 512-residue polypeptide: Histidine ammonia-lyase (512 aa).

The 5-imidazolinone (Cys-Gly) cross-link spans 143–145 (CSG). Residue serine 144 is modified to 2,3-didehydroalanine (Ser).

This sequence belongs to the PAL/histidase family. Contains an active site 4-methylidene-imidazol-5-one (MIO), which is formed autocatalytically by cyclization and dehydration of residues Cys-Ser-Gly.

The protein localises to the cytoplasm. The enzyme catalyses L-histidine = trans-urocanate + NH4(+). The protein operates within amino-acid degradation; L-histidine degradation into L-glutamate; N-formimidoyl-L-glutamate from L-histidine: step 1/3. The chain is Histidine ammonia-lyase from Streptomyces coelicolor (strain ATCC BAA-471 / A3(2) / M145).